The following is a 103-amino-acid chain: Histone H4 (103 aa).

Residues 1 to 14 show a composition bias toward gly residues; the sequence is MTGRGKGGKGLGKG. Residues 1 to 20 form a disordered region; the sequence is MTGRGKGGKGLGKGGAKRHR. N6-acetyl-N6-methyllysine; alternate is present on residues K6 and K13. A DNA-binding region spans residues 17–21; it reads KRHRK.

The protein belongs to the histone H4 family. As to quaternary structure, the nucleosome is a histone octamer containing two molecules each of H2A, H2B, H3 and H4 assembled in one H3-H4 heterotetramer and two H2A-H2B heterodimers. The octamer wraps approximately 147 bp of DNA.

Its subcellular location is the nucleus. It is found in the chromosome. In terms of biological role, core component of nucleosome. Nucleosomes wrap and compact DNA into chromatin, limiting DNA accessibility to the cellular machineries which require DNA as a template. Histones thereby play a central role in transcription regulation, DNA repair, DNA replication and chromosomal stability. DNA accessibility is regulated via a complex set of post-translational modifications of histones, also called histone code, and nucleosome remodeling. The polypeptide is Histone H4 (Diadromus pulchellus (Parasitic wasp)).